The following is a 160-amino-acid chain: Type-1 angiotensin II receptor-associated protein (160 aa).

At 1–9 (MELPAVNLK) the chain is on the extracellular side. The helical transmembrane segment at 10-30 (VILLVHWLLTTWGCLAFSGSY) threads the bilayer. Residues 31–53 (AWGNFTILALGVWAVAQRDSVDA) lie on the Cytoplasmic side of the membrane. A helical transmembrane segment spans residues 54 to 74 (IGMFLGGLVATIFLDIIYISI). The Extracellular portion of the chain corresponds to 75-86 (FYSSVAVGDTGR). A helical transmembrane segment spans residues 87-107 (FSAGMAIFSLLLKPFSCCLVY). Topologically, residues 108–160 (HMHRERGGELPLRSDFFGPSQEHSAYQTIDSSDSPADPLASLENKGQAAPRGY) are cytoplasmic. Residues 110 to 122 (HRERGGELPLRSD) form an interaction with AGTR1 region. Phosphoserine is present on S127. The segment at 128 to 160 (QEHSAYQTIDSSDSPADPLASLENKGQAAPRGY) is disordered. T135 carries the phosphothreonine modification. A compositionally biased stretch (low complexity) spans 137 to 149 (DSSDSPADPLASL). S138 carries the post-translational modification Phosphoserine.

Interacts with RACK1, and with the carboxy-terminal region of AGTR1.

It is found in the endoplasmic reticulum membrane. The protein resides in the golgi apparatus membrane. It localises to the cytoplasmic vesicle membrane. In terms of biological role, appears to be a negative regulator of type-1 angiotensin II receptor-mediated signaling by regulating receptor internalization as well as mechanism of receptor desensitization such as phosphorylation. May play a role of negative regulator in cardiomyocyte hypertrophy induced by angiotensin II through an inhibition of p38 mitogen-activated protein kinase pathway. Attenuates type-1 angiotensin II receptor growth promoting effect and angiotensin II-induced phosphorylation of protein kinase AKT and of STAT3. This is Type-1 angiotensin II receptor-associated protein (Agtrap) from Rattus norvegicus (Rat).